We begin with the raw amino-acid sequence, 750 residues long: uncharacterized protein (750 aa).

The next 3 membrane-spanning stretches (helical) occupy residues 1–21 (MSIISSWLLVSIICLTTSIVT), 465–485 (YGANETGIATFIPGSSIISYL), and 586–606 (GMFGAAIYSWNFEGMSFVAVS).

The protein resides in the membrane. This is an uncharacterized protein from Saccharomyces cerevisiae (strain ATCC 204508 / S288c) (Baker's yeast).